The following is a 345-amino-acid chain: Phosphate acyltransferase (345 aa).

Belongs to the PlsX family. As to quaternary structure, homodimer. Probably interacts with PlsY.

The protein resides in the cytoplasm. The enzyme catalyses a fatty acyl-[ACP] + phosphate = an acyl phosphate + holo-[ACP]. Its pathway is lipid metabolism; phospholipid metabolism. In terms of biological role, catalyzes the reversible formation of acyl-phosphate (acyl-PO(4)) from acyl-[acyl-carrier-protein] (acyl-ACP). This enzyme utilizes acyl-ACP as fatty acyl donor, but not acyl-CoA. The polypeptide is Phosphate acyltransferase (Dichelobacter nodosus (strain VCS1703A)).